The primary structure comprises 329 residues: Malate dehydrogenase (329 aa).

12–18 (GAAGQIG) contributes to the NAD(+) binding site. Substrate is bound by residues arginine 95 and arginine 101. NAD(+)-binding positions include asparagine 108, glutamine 115, and 132–134 (VGN). Substrate contacts are provided by asparagine 134 and arginine 165. The active-site Proton acceptor is histidine 190.

The protein belongs to the LDH/MDH superfamily. MDH type 2 family.

The catalysed reaction is (S)-malate + NAD(+) = oxaloacetate + NADH + H(+). Functionally, catalyzes the reversible oxidation of malate to oxaloacetate. The chain is Malate dehydrogenase from Polynucleobacter asymbioticus (strain DSM 18221 / CIP 109841 / QLW-P1DMWA-1) (Polynucleobacter necessarius subsp. asymbioticus).